The sequence spans 1368 residues: DNA-directed RNA polymerase subunit beta (1368 aa).

Belongs to the RNA polymerase beta chain family. As to quaternary structure, the RNAP catalytic core consists of 2 alpha, 1 beta, 1 beta' and 1 omega subunit. When a sigma factor is associated with the core the holoenzyme is formed, which can initiate transcription.

The catalysed reaction is RNA(n) + a ribonucleoside 5'-triphosphate = RNA(n+1) + diphosphate. Its function is as follows. DNA-dependent RNA polymerase catalyzes the transcription of DNA into RNA using the four ribonucleoside triphosphates as substrates. In Paraburkholderia phytofirmans (strain DSM 17436 / LMG 22146 / PsJN) (Burkholderia phytofirmans), this protein is DNA-directed RNA polymerase subunit beta.